An 83-amino-acid chain; its full sequence is MANHKSALKRIRSNEKRRVLNRYQHKTTRNAIKALRLATDKSDAAAKLSTVISMIDKLAKKNIIHDNKASNLKSKLTKHVAKL.

It belongs to the bacterial ribosomal protein bS20 family.

Binds directly to 16S ribosomal RNA. This is Small ribosomal subunit protein bS20 from Flavobacterium johnsoniae (strain ATCC 17061 / DSM 2064 / JCM 8514 / BCRC 14874 / CCUG 350202 / NBRC 14942 / NCIMB 11054 / UW101) (Cytophaga johnsonae).